A 203-amino-acid polypeptide reads, in one-letter code: Ras-related protein RABG3b (203 aa).

Residue G15–T22 coordinates GTP. The short motif at Y37–F45 is the Effector region element. GTP-binding positions include D63–Q67, N125–D128, and S158–A159. Residues C201 and C203 are each lipidated (S-geranylgeranyl cysteine). C203 carries the cysteine methyl ester modification.

This sequence belongs to the small GTPase superfamily. Rab family. Interacts with VPS39. As to expression, expressed in xylem cells of inflorescence stems.

It localises to the cell membrane. Intracellular vesicle trafficking and protein transport. Functions in autophagy. Involved in xylem and tracheary element differentiation. This is Ras-related protein RABG3b (RABG3B) from Arabidopsis thaliana (Mouse-ear cress).